The following is a 203-amino-acid chain: Ribosomal RNA large subunit methyltransferase E (203 aa).

Residues Gly-51, Trp-53, Asp-69, Asp-85, and Asp-109 each contribute to the S-adenosyl-L-methionine site. The active-site Proton acceptor is Lys-149.

The protein belongs to the class I-like SAM-binding methyltransferase superfamily. RNA methyltransferase RlmE family.

The protein resides in the cytoplasm. It carries out the reaction uridine(2552) in 23S rRNA + S-adenosyl-L-methionine = 2'-O-methyluridine(2552) in 23S rRNA + S-adenosyl-L-homocysteine + H(+). Specifically methylates the uridine in position 2552 of 23S rRNA at the 2'-O position of the ribose in the fully assembled 50S ribosomal subunit. The protein is Ribosomal RNA large subunit methyltransferase E of Methanoculleus marisnigri (strain ATCC 35101 / DSM 1498 / JR1).